A 253-amino-acid chain; its full sequence is MVVETGVNKLVRLQGKIEGINSKIDEADLRRANAKSSIVEASSRLEKAEGEVASFQRRIRLVQQNLNDVTERAQMLQSKVDNLEDVSESVKQARNQYEEEEAESDEKIQNLEEEVKVKKRELEENEIKLREKERRNVVVHRDIEAATVKADAIEKRIEILENTIKNGLESIKDLEEREGRTNEKENNIAEQISFLDNKFKEVEIRIEAAERNCNVLEHNIKETSEEIKTWKHNTHAIEEEIAAMDDVGDDDTQ.

Residues 7 to 253 (VNKLVRLQGK…MDDVGDDDTQ (247 aa)) are a coiled coil.

This sequence belongs to the tropomyosin family. Homodimer.

In terms of biological role, tropomyosin, in association with the troponin complex, plays a central role in the calcium dependent regulation of muscle contraction. The chain is Tropomyosin-1 (TROP1) from Hydra vulgaris (Hydra).